The sequence spans 190 residues: CASP-like protein 1E2 (190 aa).

The tract at residues 1 to 21 (MEHEGKNNMNGMEMEKGKREL) is disordered. Residues 1–28 (MEHEGKNNMNGMEMEKGKRELGSRKGVE) are Cytoplasmic-facing. Residues 29–49 (LTMRVLALILTMAAATVLGVA) form a helical membrane-spanning segment. Residues 50 to 83 (KQTKVVSIKLIPTLPPLDITTTAKASYLSAFVYN) lie on the Extracellular side of the membrane. Residues 84–104 (ISVNAIACGYTAISIAILMIS) form a helical membrane-spanning segment. The Cytoplasmic portion of the chain corresponds to 105-111 (RGRRSKK). Residues 112–132 (LLMVVLLGDLVMVALLFSGTG) traverse the membrane as a helical segment. Residues 133-163 (AASAIGLMGLHGNKHVMWKKVCGVFGKFCHR) lie on the Extracellular side of the membrane. A helical transmembrane segment spans residues 164–184 (AAPSLPLTLLAAVVFMFLVVL). The Cytoplasmic portion of the chain corresponds to 185–190 (DAIKLP).

The protein belongs to the Casparian strip membrane proteins (CASP) family. As to quaternary structure, homodimer and heterodimers.

The protein resides in the cell membrane. The sequence is that of CASP-like protein 1E2 from Arabidopsis thaliana (Mouse-ear cress).